Consider the following 398-residue polypeptide: Acetate kinase (398 aa).

Residue Asn-10 coordinates Mg(2+). Lys-17 contributes to the ATP binding site. Substrate is bound at residue Arg-91. Asp-148 acts as the Proton donor/acceptor in catalysis. ATP is bound by residues 208–212 (HLGNG), 283–285 (DCR), and 331–335 (GIGEN). Residue Glu-385 participates in Mg(2+) binding.

It belongs to the acetokinase family. As to quaternary structure, homodimer. Requires Mg(2+) as cofactor. It depends on Mn(2+) as a cofactor.

The protein localises to the cytoplasm. It catalyses the reaction acetate + ATP = acetyl phosphate + ADP. Its pathway is metabolic intermediate biosynthesis; acetyl-CoA biosynthesis; acetyl-CoA from acetate: step 1/2. Catalyzes the formation of acetyl phosphate from acetate and ATP. Can also catalyze the reverse reaction. This is Acetate kinase from Shewanella pealeana (strain ATCC 700345 / ANG-SQ1).